The primary structure comprises 526 residues: Glucose-6-phosphate isomerase (526 aa).

E347 acts as the Proton donor in catalysis. Active-site residues include H378 and K493.

It belongs to the GPI family.

It is found in the cytoplasm. It catalyses the reaction alpha-D-glucose 6-phosphate = beta-D-fructose 6-phosphate. It functions in the pathway carbohydrate biosynthesis; gluconeogenesis. Its pathway is carbohydrate degradation; glycolysis; D-glyceraldehyde 3-phosphate and glycerone phosphate from D-glucose: step 2/4. Catalyzes the reversible isomerization of glucose-6-phosphate to fructose-6-phosphate. This chain is Glucose-6-phosphate isomerase, found in Chlamydia pneumoniae (Chlamydophila pneumoniae).